The chain runs to 394 residues: Elongation factor Tu (394 aa).

The tr-type G domain maps to 10–204 (KPHVNIGTIG…AVDSYIPQPV (195 aa)). The tract at residues 19 to 26 (GHVDHGKT) is G1. GTP is bound at residue 19–26 (GHVDHGKT). Thr-26 contacts Mg(2+). The interval 60–64 (GITIS) is G2. The segment at 81 to 84 (DCPG) is G3. GTP is bound by residues 81-85 (DCPGH) and 136-139 (NKVD). The G4 stretch occupies residues 136–139 (NKVD). The segment at 174–176 (SAL) is G5.

It belongs to the TRAFAC class translation factor GTPase superfamily. Classic translation factor GTPase family. EF-Tu/EF-1A subfamily. Monomer.

It localises to the cytoplasm. It carries out the reaction GTP + H2O = GDP + phosphate + H(+). In terms of biological role, GTP hydrolase that promotes the GTP-dependent binding of aminoacyl-tRNA to the A-site of ribosomes during protein biosynthesis. In Rickettsia parkeri, this protein is Elongation factor Tu.